The sequence spans 320 residues: GTP 3',8-cyclase (320 aa).

A Radical SAM core domain is found at 5–225; sequence QFGRKINYLR…IQLIKKDEKA (221 aa). Residue Arg-14 participates in GTP binding. 2 residues coordinate [4Fe-4S] cluster: Cys-21 and Cys-25. Residue Tyr-27 coordinates S-adenosyl-L-methionine. Cys-28 is a [4Fe-4S] cluster binding site. Arg-64 is a binding site for GTP. S-adenosyl-L-methionine is bound at residue Gly-68. Thr-95 is a GTP binding site. Residue Ser-119 participates in S-adenosyl-L-methionine binding. Lys-155 contributes to the GTP binding site. Met-189 provides a ligand contact to S-adenosyl-L-methionine. The [4Fe-4S] cluster site is built by Cys-248 and Cys-251. Residue 253–255 coordinates GTP; it reads RIR. Cys-265 is a binding site for [4Fe-4S] cluster.

The protein belongs to the radical SAM superfamily. MoaA family. As to quaternary structure, monomer and homodimer. The cofactor is [4Fe-4S] cluster.

The catalysed reaction is GTP + AH2 + S-adenosyl-L-methionine = (8S)-3',8-cyclo-7,8-dihydroguanosine 5'-triphosphate + 5'-deoxyadenosine + L-methionine + A + H(+). It participates in cofactor biosynthesis; molybdopterin biosynthesis. Catalyzes the cyclization of GTP to (8S)-3',8-cyclo-7,8-dihydroguanosine 5'-triphosphate. The chain is GTP 3',8-cyclase from Campylobacter jejuni subsp. jejuni serotype O:6 (strain 81116 / NCTC 11828).